A 100-amino-acid polypeptide reads, in one-letter code: Small ribosomal subunit protein uS14c (100 aa).

It belongs to the universal ribosomal protein uS14 family. As to quaternary structure, part of the 30S ribosomal subunit.

The protein resides in the plastid. Its subcellular location is the chloroplast. Binds 16S rRNA, required for the assembly of 30S particles. The chain is Small ribosomal subunit protein uS14c from Illicium oligandrum (Star anise).